A 344-amino-acid chain; its full sequence is 2-aminoethylphosphonate--pyruvate transaminase (344 aa).

An N6-(pyridoxal phosphate)lysine modification is found at Lys-194.

It belongs to the class-V pyridoxal-phosphate-dependent aminotransferase family. PhnW subfamily. As to quaternary structure, homodimer. The cofactor is pyridoxal 5'-phosphate.

It catalyses the reaction (2-aminoethyl)phosphonate + pyruvate = phosphonoacetaldehyde + L-alanine. Its function is as follows. Involved in phosphonate degradation. This Bacillus cereus protein is 2-aminoethylphosphonate--pyruvate transaminase.